Here is a 205-residue protein sequence, read N- to C-terminus: Pre-rRNA-processing protein TSR2 (205 aa).

The segment at 144 to 205 is disordered; sequence SKRVVHIEGD…LVQPKGRRKH (62 aa). Residues 152-177 are compositionally biased toward acidic residues; sequence GDDDEDDEDVEDYDDEDEDEEMDEVV.

The protein belongs to the TSR2 family. In terms of assembly, interacts with RPS26A.

The protein resides in the cytoplasm. The protein localises to the nucleus. Required for 20S pre-rRNA processing. The sequence is that of Pre-rRNA-processing protein TSR2 from Saccharomyces cerevisiae (strain ATCC 204508 / S288c) (Baker's yeast).